Here is a 232-residue protein sequence, read N- to C-terminus: MAKISKRRQAFAAKVDRQKLYAIEEALSLVKECASAKFDESIDVAVQLGIDAKKSDQVVRGSVVLPAGTGKSVRVAVFAQGEKAEQARAAGAEIVGMEDLAEQIKAGQMDFDIVIASPDTMRIVGTLGQILGPRGLMPNPKVGTVTPDVATAVKNAKAGQVQFRVDKAGIIHATIGRASFEPTALRSNLSALIEALQKAKPATSKGVYLRKIALSSTMGVGVRVDQGTLAAQ.

This sequence belongs to the universal ribosomal protein uL1 family. As to quaternary structure, part of the 50S ribosomal subunit.

Its function is as follows. Binds directly to 23S rRNA. The L1 stalk is quite mobile in the ribosome, and is involved in E site tRNA release. In terms of biological role, protein L1 is also a translational repressor protein, it controls the translation of the L11 operon by binding to its mRNA. This Burkholderia lata (strain ATCC 17760 / DSM 23089 / LMG 22485 / NCIMB 9086 / R18194 / 383) protein is Large ribosomal subunit protein uL1.